A 728-amino-acid chain; its full sequence is Phomopsene synthase (728 aa).

The segment at 1–327 (MEYRYSYVID…PRYHSDQSLD (327 aa)) is terpene cyclase. Mg(2+) is bound by residues Asp-94 and Asp-98. Residues Asp-94, Asp-98, 181 to 184 (RIVD), Asn-226, 230 to 234 (SWEKE), and 319 to 320 (RY) each bind substrate. The short motif at 94–98 (DDLVD) is the DDXXD 1 element. The short motif at 226–234 (NDVQSWEKE) is the NSE/DTE element. The prenyltransferase stretch occupies residues 328–728 (EMMVARMKYG…FRFLLSLLKV (401 aa)). Residues 352 to 363 (ENRGTKRTHQDD) are compositionally biased toward basic and acidic residues. The segment at 352–379 (ENRGTKRTHQDDTEGVQSVKRFNGASTK) is disordered. 3 tandem repeats follow at residues 381–386 (GINGTN), 387–392 (GINGLN), and 393–398 (GINGSN). Residues 381–398 (GINGTNGINGLNGINGSN) form a 3 X 6 AA approximate tandem repeats region. Isopentenyl diphosphate-binding residues include Lys-447, Arg-450, and His-479. Residues Asp-486 and Asp-490 each coordinate Mg(2+). A DDXXD 2 motif is present at residues 486–490 (DDVQD). Arg-495 serves as a coordination point for dimethylallyl diphosphate. Arg-496 serves as a coordination point for isopentenyl diphosphate. Dimethylallyl diphosphate-binding residues include Lys-574, Thr-575, Gln-610, Asn-617, Lys-627, and Lys-637.

It in the N-terminal section; belongs to the terpene synthase family. In the C-terminal section; belongs to the FPP/GGPP synthase family. Hexamer. It depends on Mg(2+) as a cofactor.

The catalysed reaction is isopentenyl diphosphate + (2E,6E)-farnesyl diphosphate = (2E,6E,10E)-geranylgeranyl diphosphate + diphosphate. The protein operates within secondary metabolite biosynthesis; terpenoid biosynthesis. Bifunctional terpene synthase; part of the gene cluster that mediates the biosynthesis of the diterpene methyl phomopsenonate. At first, the universal precursor of diterpene, geranylgeranyl diphosphate (GGPP) is provided and is cyclized by the unusual bifunctional terpene synthase PaPS to give phomopsene. The C-terminal prenyltransferase domain of PaPS catalyzes formation of GGPP, whereas the N-terminal terpene cyclase domain catalyzes the cyclization of GGPP to phomopsene. Since the oxidation of a methylgroup to a carboxyl group is frequently catalyzed by a cytochrome P450 monooxygenase, the C-16 methyl group would be oxidized by the cluster-specific cytochrome P450 monooxygenase ORF3. Subsequently, oxidation of the allylic position and methylation of the carboxyl group may give methyl phomopsenonate. Although further study is necessary to identify genes such as a monooxygenase and a methyltransferase, the predicted functions of genes on the cluster are correlated with the structure of methyl phomopsenonate. This Phomopsis amygdali (Fusicoccum amygdali) protein is Phomopsene synthase.